A 245-amino-acid chain; its full sequence is Eukaryotic translation initiation factor 6 (245 aa).

2 positions are modified to phosphoserine; by CK1: Ser174 and Ser175. Ser231 carries the phosphoserine modification.

The protein belongs to the eIF-6 family. As to quaternary structure, monomer. Associates with the 60S ribosomal subunit. In terms of processing, phosphorylation at Ser-174 and Ser-175 promotes nuclear export.

Its subcellular location is the cytoplasm. It is found in the nucleus. The protein resides in the nucleolus. Its function is as follows. Binds to the 60S ribosomal subunit and prevents its association with the 40S ribosomal subunit to form the 80S initiation complex in the cytoplasm. Is also involved in ribosome biogenesis. Associates with pre-60S subunits in the nucleus and is involved in its nuclear export. Cytoplasmic release of TIF6 from 60S subunits and nuclear relocalization is promoted by the GTPase RIA1/EFL1 and by SDO1. Also required for pre-rRNA processing. This chain is Eukaryotic translation initiation factor 6, found in Saccharomyces cerevisiae (strain ATCC 204508 / S288c) (Baker's yeast).